Reading from the N-terminus, the 220-residue chain is Ribosomal RNA large subunit methyltransferase E (220 aa).

The S-adenosyl-L-methionine site is built by glycine 60, tryptophan 62, aspartate 92, aspartate 108, and aspartate 133. Lysine 173 (proton acceptor) is an active-site residue. The interval lysine 198–arginine 220 is disordered.

It belongs to the class I-like SAM-binding methyltransferase superfamily. RNA methyltransferase RlmE family.

It localises to the cytoplasm. The enzyme catalyses uridine(2552) in 23S rRNA + S-adenosyl-L-methionine = 2'-O-methyluridine(2552) in 23S rRNA + S-adenosyl-L-homocysteine + H(+). In terms of biological role, specifically methylates the uridine in position 2552 of 23S rRNA at the 2'-O position of the ribose in the fully assembled 50S ribosomal subunit. The chain is Ribosomal RNA large subunit methyltransferase E from Burkholderia cenocepacia (strain HI2424).